Here is a 619-residue protein sequence, read N- to C-terminus: 1-deoxy-D-xylulose-5-phosphate synthase (619 aa).

Residues H80 and 121–123 (GHS) each bind thiamine diphosphate. A Mg(2+)-binding site is contributed by D152. Thiamine diphosphate is bound by residues 153–154 (GA), N181, Y288, and E370. A Mg(2+)-binding site is contributed by N181.

Belongs to the transketolase family. DXPS subfamily. As to quaternary structure, homodimer. Mg(2+) serves as cofactor. Thiamine diphosphate is required as a cofactor.

It catalyses the reaction D-glyceraldehyde 3-phosphate + pyruvate + H(+) = 1-deoxy-D-xylulose 5-phosphate + CO2. It participates in metabolic intermediate biosynthesis; 1-deoxy-D-xylulose 5-phosphate biosynthesis; 1-deoxy-D-xylulose 5-phosphate from D-glyceraldehyde 3-phosphate and pyruvate: step 1/1. Catalyzes the acyloin condensation reaction between C atoms 2 and 3 of pyruvate and glyceraldehyde 3-phosphate to yield 1-deoxy-D-xylulose-5-phosphate (DXP). This Yersinia pseudotuberculosis serotype O:3 (strain YPIII) protein is 1-deoxy-D-xylulose-5-phosphate synthase.